The primary structure comprises 65 residues: UPF0434 protein HS_0657 (65 aa).

The protein belongs to the UPF0434 family.

This Histophilus somni (strain 129Pt) (Haemophilus somnus) protein is UPF0434 protein HS_0657.